We begin with the raw amino-acid sequence, 1240 residues long: Cohesin subunit SA-3 (1240 aa).

Low complexity predominate over residues 1-25 (MPTLWSPSTQHHGSSSGSESSPLQK). The disordered stretch occupies residues 1 to 108 (MPTLWSPSTQ…VSSGNGKNES (108 aa)). Polar residues predominate over residues 97–108 (RIVSSGNGKNES). Positions 324 to 409 (FVHRYRDILP…NRFKDRMVSM (86 aa)) constitute an SCD domain. 2 disordered regions span residues 1077 to 1154 (AEAS…PELI) and 1213 to 1240 (DKML…MEDF). Over residues 1115–1125 (GPTTPTLTSTA) the composition is skewed to polar residues. Over residues 1126 to 1141 (VKRKQSLRTVGKKQKG) the composition is skewed to basic residues. Ser-1218 is modified (phosphoserine).

It belongs to the SCC3 family. As to quaternary structure, component of the meiosis-specific cohesin complex, which also contains the SMC1 (SMC1A or SMC1B) and SMC3 heterodimer. Such complex likely contains RAD21, or the meiosis-specific related protein REC8. Interacts with CCDC79/TERB1; recruiting cohesin to telomeres to develop structural rigidity. Phosphorylated. In terms of tissue distribution, testis specific.

The protein localises to the nucleus. It is found in the chromosome. Its subcellular location is the centromere. Its function is as follows. Meiosis specific component of cohesin complex. The cohesin complex is required for the cohesion of sister chromatids after DNA replication. The cohesin complex apparently forms a large proteinaceous ring within which sister chromatids can be trapped. At anaphase, the complex is cleaved and dissociates from chromatin, allowing sister chromatids to segregate. The meiosis-specific cohesin complex probably replaces mitosis specific cohesin complex when it dissociates from chromatin during prophase I. This Mus musculus (Mouse) protein is Cohesin subunit SA-3 (Stag3).